We begin with the raw amino-acid sequence, 707 residues long: MAP kinase-interacting serine/threonine-protein kinase mnk-1 (707 aa).

A compositionally biased stretch (polar residues) spans 1–24 (MFFLDNTDSMTSSSRGITMPNTIS). Disordered regions lie at residues 1-29 (MFFL…HEDV) and 101-131 (RQRE…YVGR). Residues 203–493 (KLTDEHLGSG…ADQILSHRWL (291 aa)) form the Protein kinase domain. Residues 209-217 (LGSGAYGSV) and Lys232 each bind ATP. Catalysis depends on Asp325, which acts as the Proton acceptor. Disordered regions lie at residues 589–628 (RSGE…SADD) and 688–707 (FEDE…QVNV).

This sequence belongs to the protein kinase superfamily. CAMK Ser/Thr protein kinase family. It depends on Mg(2+) as a cofactor. As to expression, expressed in pharynx, intestine, vulva and body wall muscles.

The protein resides in the nucleus. It is found in the cytoplasm. It catalyses the reaction L-seryl-[protein] + ATP = O-phospho-L-seryl-[protein] + ADP + H(+). The catalysed reaction is L-threonyl-[protein] + ATP = O-phospho-L-threonyl-[protein] + ADP + H(+). In terms of biological role, serine/threonine-protein kinase which is required in the germline to positively regulate lifespan. May play a role in body wall muscle contraction. May be involved in embryonic cytokinesis. In Caenorhabditis elegans, this protein is MAP kinase-interacting serine/threonine-protein kinase mnk-1.